A 601-amino-acid chain; its full sequence is Ubiquitin carboxyl-terminal hydrolase MINDY-2 (601 aa).

The interval 1–205 (MENSPDSPQP…LCKEEEEDPA (205 aa)) is disordered. Over residues 24–34 (EGRRRGGREAE) the composition is skewed to basic and acidic residues. Residue T62 is modified to Phosphothreonine. Position 82 is a phosphoserine (S82). 3 stretches are compositionally biased toward low complexity: residues 127-141 (EEPS…SCSE), 148-169 (SPSL…SSEF), and 186-195 (GAAGPPRAAP). The active-site Nucleophile is C244. Catalysis depends on H426, which acts as the Proton acceptor. The tract at residues 485–537 (GQQDQIDQDYLMALSLQQEQQSQEINWEQIPEGISDLELAKKLQEEEDRRASQ) is ubiquitin-binding domain (UBD). Residues 534–601 (RASQYYQEQE…EKEKNSCVIL (68 aa)) are disordered. Low complexity predominate over residues 536–570 (SQYYQEQEQAQAVVTTTTPSTQAQQGQPAQASPSS). Residues 577 to 601 (SERKRKEPREKDKEKEKEKNSCVIL) show a composition bias toward basic and acidic residues.

The protein belongs to the MINDY deubiquitinase family. FAM63 subfamily.

The catalysed reaction is Thiol-dependent hydrolysis of ester, thioester, amide, peptide and isopeptide bonds formed by the C-terminal Gly of ubiquitin (a 76-residue protein attached to proteins as an intracellular targeting signal).. Hydrolase that can remove 'Lys-48'-linked conjugated ubiquitin from proteins. Can also bind to polyubiquitin chains of different linkage types, including 'Lys-6', 'Lys-11', 'Lys-29', 'Lys-33' and 'Lys-63'. May play a regulatory role at the level of protein turnover. The chain is Ubiquitin carboxyl-terminal hydrolase MINDY-2 (Mindy2) from Mus musculus (Mouse).